The primary structure comprises 214 residues: Putative nickel/cobalt efflux system MJ1092 (214 aa).

Helical transmembrane passes span 2–22 (VMIM…LHAL), 46–66 (ILLG…LGIL), 79–99 (VHDM…IWII), 116–136 (VITL…AVLL), 149–169 (IYVA…AVAF), and 188–208 (LPLI…AHPI).

The protein belongs to the NiCoT transporter (TC 2.A.52) family.

It is found in the cell membrane. Efflux system for nickel and cobalt. The chain is Putative nickel/cobalt efflux system MJ1092 from Methanocaldococcus jannaschii (strain ATCC 43067 / DSM 2661 / JAL-1 / JCM 10045 / NBRC 100440) (Methanococcus jannaschii).